Consider the following 306-residue polypeptide: Homoserine kinase (306 aa).

95–105 (PQSRGLGSSAA) serves as a coordination point for ATP.

Belongs to the GHMP kinase family. Homoserine kinase subfamily.

The protein resides in the cytoplasm. It catalyses the reaction L-homoserine + ATP = O-phospho-L-homoserine + ADP + H(+). It functions in the pathway amino-acid biosynthesis; L-threonine biosynthesis; L-threonine from L-aspartate: step 4/5. Functionally, catalyzes the ATP-dependent phosphorylation of L-homoserine to L-homoserine phosphate. The sequence is that of Homoserine kinase from Corynebacterium urealyticum (strain ATCC 43042 / DSM 7109).